The sequence spans 463 residues: Asparagine--tRNA ligase (463 aa).

The protein belongs to the class-II aminoacyl-tRNA synthetase family. In terms of assembly, homodimer.

Its subcellular location is the cytoplasm. The catalysed reaction is tRNA(Asn) + L-asparagine + ATP = L-asparaginyl-tRNA(Asn) + AMP + diphosphate + H(+). The protein is Asparagine--tRNA ligase of Clostridium novyi (strain NT).